Here is a 1084-residue protein sequence, read N- to C-terminus: Putative tRNA-specific 2-thiouridylase (1084 aa).

A run of 3 helical transmembrane segments spans residues 1–21 (MLIF…FILT), 32–52 (FIIS…FYVI), and 309–329 (IITI…YLIL). C538 acts as the Nucleophile in catalysis. The cysteines at positions 538 and 715 are disulfide-linked. The active-site Cysteine persulfide intermediate is the C715.

It belongs to the MnmA/TRMU family.

The protein resides in the plastid. It is found in the apicoplast. The protein localises to the membrane. It catalyses the reaction S-sulfanyl-L-cysteinyl-[protein] + uridine(34) in tRNA + AH2 + ATP = 2-thiouridine(34) in tRNA + L-cysteinyl-[protein] + A + AMP + diphosphate + H(+). Its function is as follows. Catalyzes the 2-thiolation of uridine at the wobble position (U34) of tRNA, leading to the formation of s(2)U34. Required for apicoplast maintenance. This is Putative tRNA-specific 2-thiouridylase from Plasmodium falciparum (isolate 3D7).